The chain runs to 89 residues: Small ribosomal subunit protein bS20 (89 aa).

The protein belongs to the bacterial ribosomal protein bS20 family.

Functionally, binds directly to 16S ribosomal RNA. In Stenotrophomonas maltophilia (strain K279a), this protein is Small ribosomal subunit protein bS20.